A 182-amino-acid polypeptide reads, in one-letter code: CKLF-like MARVEL transmembrane domain-containing protein 3 (182 aa).

Acidic residues predominate over residues 1 to 12 (MWPPDPDPDPDP). A disordered region spans residues 1–21 (MWPPDPDPDPDPEPAGGSRPG). The MARVEL domain maps to 36-155 (FLCSLKGRLL…DFYLIFNDVA (120 aa)). 3 helical membrane-spanning segments follow: residues 64–84 (ASAF…FLFA), 101–121 (MDFL…ITAI), and 131–151 (AAGV…YLIF).

The protein belongs to the chemokine-like factor family. Expressed in the leukocytes, placenta and testis.

It localises to the membrane. This Homo sapiens (Human) protein is CKLF-like MARVEL transmembrane domain-containing protein 3 (CMTM3).